The following is a 156-amino-acid chain: Small ribosomal subunit protein uS7 (156 aa).

This sequence belongs to the universal ribosomal protein uS7 family. Part of the 30S ribosomal subunit. Contacts proteins S9 and S11.

In terms of biological role, one of the primary rRNA binding proteins, it binds directly to 16S rRNA where it nucleates assembly of the head domain of the 30S subunit. Is located at the subunit interface close to the decoding center, probably blocks exit of the E-site tRNA. The protein is Small ribosomal subunit protein uS7 of Rhodobacter capsulatus (Rhodopseudomonas capsulata).